The following is a 747-amino-acid chain: MGISDKVNKLFNFICKNDVVSVRKYLEKGINPNEKNKDNCTMLYTAVEHRYIDIIKLLLDHGADPNIYSSDHMTPLHSVSVIIPIRKISKLITKYGNLVTLANYRNTFFVYNENRNLEIAKMLIQNGALVNMNNMKNITPLHIASSSGSYKMVELLLLHGANTNALTSYGETSLHYSVSSNDLNISELLIENGTNVNVANKDSITALIIAVEIMSIDLVRLLLDKGADTNAIGLERFKLYVTETKQNNNILKYLNTNNVNTNVTMINEYIASELYDWNRNSATSKLMFRSCFEPCTVPVTLATRKGSKELLEILLEYGCNPDICEKTTSTYAMHYAVIRKHYEMLNILIRYDAYTDVKDRQQNTPAHYAVKLPISESCKYLKLLKLAGASFNLTNRKGRTPLHTACKYNNTEAVKYLIESGCDTNIVDVMSFTPLNYAVYYEREDTVKILLESGCVDPNLCDYKEVSPIIQAIKRNNKNIIKMLLNAGIDIKPINECYGLHMLAALHNKDLLKWLLCTISELEVNGVDDHYVPLASYVAELSDIRIMEILIEKGLDLNKVTGPDETMFTMIFSATSDLRKSIIDLLISQIAADEEFSEGFKINKNMIQTDKYLLRVYHECKNQVSKMGEIKLGDGFTMIDIYKNRRSIHVNFLARYAMQLSTIDLREVPIYRKYLEILINPAIKRHKILNAAKDTMNNILHRKEKFYWNLLPVEIKFNILEYLNSKDLISLIHSNTVNEIDLSHIFI.

ANK repeat units follow at residues 38–67 (DNCT…DPNI), 103–132 (NYRN…LVNM), 136–165 (KNIT…NTNA), 169–198 (YGET…NVNV), 202–231 (DSIT…DTNA), 234–263 (LERF…NTNV), 294–323 (PCTV…NPDI), 328–357 (TSTY…YTDV), 361–393 (QQNT…SFNL), 397–426 (KGRT…DTNI), 430–460 (MSFT…DPNL), 464–493 (KEVS…DIKP), 495–524 (NECY…ELEV), and 529–559 (DHYV…DLNK).

This is Putative ankyrin repeat protein FPV222 from Vertebrata (FPV).